A 547-amino-acid chain; its full sequence is ATP synthase subunit alpha (547 aa).

Residue 172-179 (GDRKTGKT) participates in ATP binding.

Belongs to the ATPase alpha/beta chains family. F-type ATPases have 2 components, CF(1) - the catalytic core - and CF(0) - the membrane proton channel. CF(1) has five subunits: alpha(3), beta(3), gamma(1), delta(1), epsilon(1). CF(0) has three main subunits: a(1), b(2) and c(9-12). The alpha and beta chains form an alternating ring which encloses part of the gamma chain. CF(1) is attached to CF(0) by a central stalk formed by the gamma and epsilon chains, while a peripheral stalk is formed by the delta and b chains.

Its subcellular location is the cell membrane. The catalysed reaction is ATP + H2O + 4 H(+)(in) = ADP + phosphate + 5 H(+)(out). Functionally, produces ATP from ADP in the presence of a proton gradient across the membrane. The alpha chain is a regulatory subunit. The polypeptide is ATP synthase subunit alpha (Rhodococcus opacus (strain B4)).